We begin with the raw amino-acid sequence, 628 residues long: Probable potassium transport system protein Kup (628 aa).

11 helical membrane passes run 56-76 (ILSL…VLLI), 109-129 (LILG…TPAI), 141-161 (AAPG…TLLF), 174-194 (FFGP…VVHI), 209-229 (ALAF…AVVL), 253-273 (WFSL…AMLL), 295-315 (LIVL…TAAF), 343-363 (IYVP…VVTF), 372-392 (AYGI…FFVI), 400-420 (WALC…FFAA), and 425-445 (ILDG…LMMT).

It belongs to the HAK/KUP transporter (TC 2.A.72) family.

It localises to the cell inner membrane. It catalyses the reaction K(+)(in) + H(+)(in) = K(+)(out) + H(+)(out). In terms of biological role, transport of potassium into the cell. Likely operates as a K(+):H(+) symporter. In Methylibium petroleiphilum (strain ATCC BAA-1232 / LMG 22953 / PM1), this protein is Probable potassium transport system protein Kup.